The sequence spans 406 residues: MSRLLFVALLAISLGYVASSSSNHLPAGLAMDLGPGVNLNERFFDQVRALIKRRLQEKGLAKPEQPELAMPLTDDDAVALQNQRSYDNVPLPAASVPTPVLVENWPTEQHSFGQVTAVAVDPQGSPVVFHRAERYWDVNTFNESNIYYLIEYGPIKENTIYVLDAKTGAIKSGWGSNMFYMPHGLTIDLHGNYWITDVAMHQAFKFKPFSNKPLLTIGKRFRPGSSVKHLCKPTSIAVATTGEFFIADGYCNSRILKFNAAGKLLRTIPQPPEFLSLQVPHAITLLEHLDLLCIADRENMRVVCPKAGLISSHGEGEPAATIQEPDLGRVFGVASFGDIVFAVNGPTSMLPVRGFTIDPRSETIIGHWGEFKNPHSMAVSVNGSALYVTEIGTNHQTNRVWKYVLA.

Positions 1–19 (MSRLLFVALLAISLGYVAS) are cleaved as a signal peptide. NHL repeat units follow at residues 168 to 209 (GAIK…FKPF), 218 to 261 (GKRF…FNAA), 264 to 308 (LLRT…PKAG), and 358 to 402 (DPRS…RVWK). 2 disulfides stabilise this stretch: Cys-231–Cys-251 and Cys-293–Cys-304.

The protein belongs to the peptidyl-alpha-hydroxyglycine alpha-amidating lyase family. Zn(2+) serves as cofactor. N-glycosylated. In terms of tissue distribution, only found in a subset of neurons distributed throughout all levels of the central nervous system (CNS). Present in at least some neuroendocrine cells. In adult brains, it is only present in a small handful of cells, the majority of which being distributed in distal parts of the medulla, with a higher expression in the posterior surface of the brain (at protein level).

The protein resides in the secreted. The enzyme catalyses a [peptide]-C-terminal (2S)-2-hydroxyglycine = a [peptide]-C-terminal amide + glyoxylate. Its function is as follows. Peptidyl-alpha-hydroxylglycine alpha-amidating lyase that catalyzes an essential reaction in C-terminal alpha-amidation of peptides. Mediates the dismutation of the unstable peptidyl(2-hydroxyglycine) intermediate to glyoxylate and the corresponding desglycine peptide amide. C-terminal amidation of peptides such as neuropeptides is essential for full biological activity. The sequence is that of Peptidyl-alpha-hydroxyglycine alpha-amidating lyase 2 (Pal2) from Drosophila melanogaster (Fruit fly).